The chain runs to 305 residues: Taste receptor type 2 member 13 (305 aa).

Residues 1 to 7 (MGSSLYD) are Extracellular-facing. The helical transmembrane segment at 8–28 (ILTIVMIAEFIFGNVTNGFIV) threads the bilayer. Residues 29–42 (LTNCIAWLSKRTLS) lie on the Cytoplasmic side of the membrane. A helical transmembrane segment spans residues 43–63 (FIGWIQLFLAISRVVLIWEML). Residues 64 to 88 (LAWLKYMKYSFSYLAGTELRVMMLT) are Extracellular-facing. The chain crosses the membrane as a helical span at residues 89 to 109 (WVVSNHFSLWLATILSIFYLL). Residues 110 to 128 (KIASFSRPVFLYLKWRVKK) lie on the Cytoplasmic side of the membrane. The chain crosses the membrane as a helical span at residues 129-149 (VLLLILLGNLIFLMFNILQIN). Over 150–182 (THIEDWMDQYKRNITWDSRVNEFVGFSNLVLLE) the chain is Extracellular. Asn-162 carries N-linked (GlcNAc...) asparagine glycosylation. The chain crosses the membrane as a helical span at residues 183 to 203 (MIMFSVTPFTVALVSFILLIF). At 204–232 (SLWKHLQKMHLSSRGERDPSTKAHVNALR) the chain is on the cytoplasmic side. The helical transmembrane segment at 233-253 (IMVSFLLLYATYFISFFISLI) threads the bilayer. The Extracellular portion of the chain corresponds to 254 to 262 (PMAHKKGLD). Residues 263-283 (LMFSLTVGLFYPSSHSFILIL) form a helical membrane-spanning segment. Topologically, residues 284-305 (GHSNLRHSSCLVITYLRCKEKD) are cytoplasmic.

This sequence belongs to the G-protein coupled receptor T2R family. Expressed in subsets of taste receptor cells of the tongue and palate epithelium and exclusively in gustducin-positive cells. Expressed in 15% taste bud cells in circumvallate and foliate papillae but only in 2% in fungiform papillae. Expressed in the duodenum, antrum and fundus (part of the stomach).

The protein resides in the membrane. Receptor that may play a role in the perception of bitterness and is gustducin-linked. May play a role in sensing the chemical composition of the gastrointestinal content. The activity of this receptor may stimulate alpha gustducin, mediate PLC-beta-2 activation and lead to the gating of TRPM5. This is Taste receptor type 2 member 13 (Tas2r13) from Rattus norvegicus (Rat).